The chain runs to 146 residues: Probable calcium-binding protein CML40 (146 aa).

The EF-hand 1 domain occupies 7-42; that stretch reads NKRDEYQRVFSCFDKSHQGKVSVSTIERCVDAIKSG. Positions 44 to 65 are disordered; that stretch reads RAVVDQEDTTNPNPEESTDDKS. Residues 116–146 form the EF-hand 2 domain; that stretch reads KSLKDCEVMISQFDINRDGIINFDEFRAMMQ. Ca(2+) is bound by residues aspartate 129, asparagine 131, aspartate 133, and glutamate 140.

Potential calcium sensor. The polypeptide is Probable calcium-binding protein CML40 (CML40) (Arabidopsis thaliana (Mouse-ear cress)).